The following is a 447-amino-acid chain: GTPase Der (447 aa).

EngA-type G domains follow at residues 3–167 and 181–354; these read PVIA…VQER and VKIA…AAAM. GTP-binding positions include 9 to 16, 56 to 60, 119 to 122, 187 to 194, 234 to 238, and 299 to 302; these read GRPNVGKS, DTGGF, NKAE, DTAGL, and NKWD. A KH-like domain is found at 355-439; the sequence is VKLPTPQLTR…PLRIEFRTNK (85 aa).

The protein belongs to the TRAFAC class TrmE-Era-EngA-EngB-Septin-like GTPase superfamily. EngA (Der) GTPase family. As to quaternary structure, associates with the 50S ribosomal subunit.

In terms of biological role, GTPase that plays an essential role in the late steps of ribosome biogenesis. This chain is GTPase Der, found in Cupriavidus taiwanensis (strain DSM 17343 / BCRC 17206 / CCUG 44338 / CIP 107171 / LMG 19424 / R1) (Ralstonia taiwanensis (strain LMG 19424)).